A 279-amino-acid polypeptide reads, in one-letter code: Pleckstrin homology domain-containing family F member 1 (279 aa).

A PH domain is found at 35-131 (VLLGEGVLTK…WISHIEECVR (97 aa)). Residues 152 to 212 (DKATDICMRC…VCSLCYRELA (61 aa)) form an FYVE-type zinc finger. Zn(2+) contacts are provided by C158, C161, C175, C178, C183, C186, C204, and C207. Positions 218–264 (EEAEEQGAGSPGQPAHLARPICGASSGDDDDSDEDKEGSRDGDWPSS) are disordered. Positions 244-253 (GDDDDSDEDK) are enriched in acidic residues.

As to expression, highly expressed in heart and skeletal muscle. Weakly expressed in brain, thymus, spleen, kidney, liver, small intestine, placenta and lung.

The protein localises to the nucleus. It localises to the cytoplasm. The protein resides in the perinuclear region. Its subcellular location is the lysosome. May induce apoptosis through the lysosomal-mitochondrial pathway. Translocates to the lysosome initiating the permeabilization of lysosomal membrane (LMP) and resulting in the release of CTSD and CTSL to the cytoplasm. Triggers the caspase-independent apoptosis by altering mitochondrial membrane permeabilization (MMP) resulting in the release of PDCD8. This chain is Pleckstrin homology domain-containing family F member 1 (PLEKHF1), found in Homo sapiens (Human).